A 1088-amino-acid chain; its full sequence is DNA-directed RNA polymerase subunit beta (1088 aa).

Belongs to the RNA polymerase beta chain family. As to quaternary structure, in plastids the minimal PEP RNA polymerase catalytic core is composed of four subunits: alpha, beta, beta', and beta''. When a (nuclear-encoded) sigma factor is associated with the core the holoenzyme is formed, which can initiate transcription.

The protein resides in the plastid. Its subcellular location is the chloroplast. The catalysed reaction is RNA(n) + a ribonucleoside 5'-triphosphate = RNA(n+1) + diphosphate. Its function is as follows. DNA-dependent RNA polymerase catalyzes the transcription of DNA into RNA using the four ribonucleoside triphosphates as substrates. In Chlorokybus atmophyticus (Soil alga), this protein is DNA-directed RNA polymerase subunit beta.